A 336-amino-acid polypeptide reads, in one-letter code: 4-hydroxy-3-methylbut-2-enyl diphosphate reductase (336 aa).

Position 32 (Cys-32) interacts with [4Fe-4S] cluster. His-61 and His-94 together coordinate (2E)-4-hydroxy-3-methylbut-2-enyl diphosphate. Positions 61 and 94 each coordinate dimethylallyl diphosphate. Isopentenyl diphosphate is bound by residues His-61 and His-94. Cys-116 lines the [4Fe-4S] cluster pocket. His-148 provides a ligand contact to (2E)-4-hydroxy-3-methylbut-2-enyl diphosphate. Residue His-148 participates in dimethylallyl diphosphate binding. Residue His-148 participates in isopentenyl diphosphate binding. Residue Glu-150 is the Proton donor of the active site. Thr-189 provides a ligand contact to (2E)-4-hydroxy-3-methylbut-2-enyl diphosphate. Residue Cys-219 coordinates [4Fe-4S] cluster. (2E)-4-hydroxy-3-methylbut-2-enyl diphosphate is bound by residues Ser-247, Ser-248, Asn-249, and Ser-292. Dimethylallyl diphosphate-binding residues include Ser-247, Ser-248, Asn-249, and Ser-292. The isopentenyl diphosphate site is built by Ser-247, Ser-248, Asn-249, and Ser-292.

Belongs to the IspH family. [4Fe-4S] cluster is required as a cofactor.

It carries out the reaction isopentenyl diphosphate + 2 oxidized [2Fe-2S]-[ferredoxin] + H2O = (2E)-4-hydroxy-3-methylbut-2-enyl diphosphate + 2 reduced [2Fe-2S]-[ferredoxin] + 2 H(+). It catalyses the reaction dimethylallyl diphosphate + 2 oxidized [2Fe-2S]-[ferredoxin] + H2O = (2E)-4-hydroxy-3-methylbut-2-enyl diphosphate + 2 reduced [2Fe-2S]-[ferredoxin] + 2 H(+). Its pathway is isoprenoid biosynthesis; dimethylallyl diphosphate biosynthesis; dimethylallyl diphosphate from (2E)-4-hydroxy-3-methylbutenyl diphosphate: step 1/1. It participates in isoprenoid biosynthesis; isopentenyl diphosphate biosynthesis via DXP pathway; isopentenyl diphosphate from 1-deoxy-D-xylulose 5-phosphate: step 6/6. Its function is as follows. Catalyzes the conversion of 1-hydroxy-2-methyl-2-(E)-butenyl 4-diphosphate (HMBPP) into a mixture of isopentenyl diphosphate (IPP) and dimethylallyl diphosphate (DMAPP). Acts in the terminal step of the DOXP/MEP pathway for isoprenoid precursor biosynthesis. This Gluconobacter oxydans (strain 621H) (Gluconobacter suboxydans) protein is 4-hydroxy-3-methylbut-2-enyl diphosphate reductase.